A 434-amino-acid chain; its full sequence is Enolase (434 aa).

A phosphoenolpyruvate-binding site is contributed by Ala41. Gln165 is a (2R)-2-phosphoglycerate binding site. The active-site Proton donor is the Glu207. 3 residues coordinate Mg(2+): Asp244, Glu291, and Asp318. Residues Lys343, Arg372, Ser373, and Lys394 each coordinate phosphoenolpyruvate. Residues Lys343, Arg372, Ser373, and Lys394 each coordinate (2R)-2-phosphoglycerate. Lys343 (proton acceptor) is an active-site residue.

The protein belongs to the enolase family. As to quaternary structure, homodimer and homooctamer; the homodimer is inactive. It depends on Mg(2+) as a cofactor.

The protein resides in the cytoplasm. It is found in the secreted. It localises to the cell surface. It carries out the reaction (2R)-2-phosphoglycerate = phosphoenolpyruvate + H2O. It functions in the pathway carbohydrate degradation; glycolysis; pyruvate from D-glyceraldehyde 3-phosphate: step 4/5. Catalyzes the reversible conversion of 2-phosphoglycerate (2-PG) into phosphoenolpyruvate (PEP). It is essential for the degradation of carbohydrates via glycolysis. Functionally, 'Moonlights' as a laminin receptor. Binds laminin when expressed on the bacterial cell surface; this probably induces destruction of the extracellular matrix, favoring invasion and dissemination. The sequence is that of Enolase from Staphylococcus aureus.